The following is a 106-amino-acid chain: uncharacterized protein (106 aa).

Helical transmembrane passes span 43–63 and 86–106; these read CSTI…LAIV and IPEL…FSLF.

It localises to the membrane. This is an uncharacterized protein from Saccharomyces cerevisiae (strain ATCC 204508 / S288c) (Baker's yeast).